The primary structure comprises 73 residues: UPF0346 protein BLi02292/BL01432 (73 aa).

Belongs to the UPF0346 family.

This is UPF0346 protein BLi02292/BL01432 from Bacillus licheniformis (strain ATCC 14580 / DSM 13 / JCM 2505 / CCUG 7422 / NBRC 12200 / NCIMB 9375 / NCTC 10341 / NRRL NRS-1264 / Gibson 46).